The chain runs to 362 residues: HLA class I histocompatibility antigen, B alpha chain (362 aa).

The N-terminal stretch at 1-24 is a signal peptide; that stretch reads MLVMAPRTVLLLLSAALALTETWA. Residues 3–11 form a VL9 epitope region; sequence VMAPRTVLL. The segment at 25 to 114 is alpha-1; sequence GSHSMRYFYT…LRGYYNQSEA (90 aa). Residues 25 to 309 are Extracellular-facing; it reads GSHSMRYFYT…PSSQSTVPIV (285 aa). N87 is an a peptide antigen binding site. A Bw6 motif motif is present at residues 101–107; that stretch reads SLRNLRG. Residue Y108 coordinates a peptide antigen. N110 is a glycosylation site (N-linked (GlcNAc...) asparagine). The interval 115–206 is alpha-2; that stretch reads GSHTLQSMYG…ENGKDKLERA (92 aa). A disulfide bridge connects residues C125 and C188. A peptide antigen contacts are provided by T167, K170, E176, Y183, and Y195. The interval 207–298 is alpha-3; the sequence is DPPKTHVTHH…GLPKPLTLRW (92 aa). Residues 209–295 form the Ig-like C1-type domain; the sequence is PKTHVTHHPI…QHEGLPKPLT (87 aa). The cysteines at positions 227 and 283 are disulfide-linked. The segment at 299–309 is connecting peptide; that stretch reads EPSSQSTVPIV. The helical transmembrane segment at 310–333 threads the bilayer; that stretch reads GIVAGLAVLAVVVIGAVVAAVMCR. Over 334-362 the chain is Cytoplasmic; sequence RKSSGGKGGSYSQAACSDSAQGSDVSLTA. The interval 337-362 is disordered; it reads SGGKGGSYSQAACSDSAQGSDVSLTA. Residues 346–362 are compositionally biased toward polar residues; that stretch reads QAACSDSAQGSDVSLTA.

Heterotrimer that consists of an alpha chain HLA-B, a beta chain B2M and a peptide (peptide-HLA-B-B2M). Early in biogenesis, HLA-B-B2M dimer interacts with the components of the peptide-loading complex composed of TAPBP, TAP1-TAP2, TAPBPL, PDIA3/ERP57 and CALR. Interacts with TAP1-TAP2 transporter via TAPBP; this interaction is obligatory for the loading of peptide epitopes delivered to the ER by TAP1-TAP2 transporter. Interacts with TAPBPL; TAPBPL binds peptide-free HLA-B-B2M complexes or those loaded with low affinity peptides, likely facilitating peptide exchange for higher affinity peptides. Only optimally assembled peptide-HLA-B-B2M trimer translocates to the surface of antigen-presenting cells, where it interacts with TCR and CD8 coreceptor on the surface of T cells. HLA-B (via polymorphic alpha-1 and alpha-2 domains) interacts with antigen-specific TCR (via CDR1, CDR2 and CDR3 domains). One HLA-B molecule (mainly via nonpolymorphic alpha-3 domain) interacts with one CD8A homodimer (via CDR-like loop); this interaction ensures peptide-HLA-B-B2M recognition by CD8-positive T cells only. Allele B*57:01 interacts (via Bw4 motif) with KIR3DL1 (via Ig-like C2-type domain); this interaction may interfere with peptide binding. Allele B*46:01 interacts with KIR2DL3. In terms of assembly, (Microbial infection) Interacts with HTLV-1 accessory protein p12I.

The protein resides in the cell membrane. It is found in the endoplasmic reticulum membrane. In terms of biological role, antigen-presenting major histocompatibility complex class I (MHCI) molecule. In complex with B2M/beta 2 microglobulin displays primarily viral and tumor-derived peptides on antigen-presenting cells for recognition by alpha-beta T cell receptor (TCR) on HLA-B-restricted CD8-positive T cells, guiding antigen-specific T cell immune response to eliminate infected or transformed cells. May also present self-peptides derived from the signal sequence of secreted or membrane proteins, although T cells specific for these peptides are usually inactivated to prevent autoreactivity. Both the peptide and the MHC molecule are recognized by TCR, the peptide is responsible for the fine specificity of antigen recognition and MHC residues account for the MHC restriction of T cells. Typically presents intracellular peptide antigens of 8 to 13 amino acids that arise from cytosolic proteolysis via constitutive proteasome and IFNG-induced immunoproteasome. Can bind different peptides containing allele-specific binding motifs, which are mainly defined by anchor residues at position 2 and 9. Functionally, allele B*07:02: Displays peptides sharing a common signature motif, namely a Pro residue at position 2 and mainly a Leu anchor residue at the C-terminus. Presents a long peptide (APRGPHGGAASGL) derived from the cancer-testis antigen CTAG1A/NY-ESO-1, eliciting a polyclonal CD8-positive T cell response against tumor cells. Presents viral epitopes derived from HIV-1 gag-pol (TPQDLNTML) and Nef (RPQVPLRPM). Presents an immunodominant epitope derived from SARS-CoV-2 N/nucleoprotein (SPRWYFYYL). Displays self-peptides including a peptide derived from the signal sequence of HLA-DPB1 (APRTVALTA). Allele B*08:01: Presents to CD8-positive T cells viral epitopes derived from EBV/HHV-4 EBNA3 (QAKWRLQTL), eliciting cytotoxic T cell response. Its function is as follows. Allele B*13:02: Presents multiple HIV-1 epitopes derived from gag (RQANFLGKI, GQMREPRGSDI), nef (RQDILDLWI), gag-pol (RQYDQILIE, GQGQWTYQI) and rev (LQLPPLERL), all having in common a Gln residue at position 2 and mainly hydrophobic amino acids Leu, Ile or Val at the C-terminus. Associated with successful control of HIV-1 infection. In terms of biological role, allele B*18:01: Preferentially presents octomeric and nonameric peptides sharing a common motif, namely a Glu at position 2 and Phe or Tyr anchor residues at the C-terminus. Presents an EBV/HHV-4 epitope derived from BZLF1 (SELEIKRY). May present to CD8-positive T cells an antigenic peptide derived from MAGEA3 (MEVDPIGHLY), triggering an anti-tumor immune response. May display a broad repertoire of self-peptides with a preference for peptides derived from RNA-binding proteins. Functionally, allele B*27:05: Presents to CD8-positive T cells immunodominant viral epitopes derived from HCV POLG (ARMILMTHF), HIV-1 gag (KRWIILGLNK), IAV NP (SRYWAIRTR), SARS-CoV-2 N/nucleoprotein (QRNAPRITF), EBV/HHV-4 EBNA4 (HRCQAIRKK) and EBV/HHV-4 EBNA6 (RRIYDLIEL), conferring longterm protection against viral infection. Can present self-peptides derived from cytosolic and nuclear proteins. All peptides carry an Arg at position 2. The peptide-bound form interacts with NK cell inhibitory receptor KIR3DL1 and inhibits NK cell activation in a peptide-specific way, being particularly sensitive to the nature of the amino acid side chain at position 8 of the antigenic peptide. KIR3DL1 fails to recognize HLA-B*27:05 in complex with B2M and EBV/HHV-4 EBNA6 (RRIYDLIEL) peptide, which can lead to increased activation of NK cells during infection. May present an altered repertoire of peptides in the absence of TAP1-TAP2 and TAPBPL. Allele B*40:01: Presents immunodominant viral epitopes derived from EBV/HHV-4 LMP2 (IEDPPFNSL) and SARS-CoV-2 N/nucleoprotein (MEVTPSGTWL), triggering memory CD8-positive T cell response. Displays self-peptides sharing a signature motif, namely a Glu at position 2 and a Leu anchor residue at the C-terminus. Its function is as follows. Allele B*41:01: Displays self-peptides sharing a signature motif, namely a Glu at position 2 and Ala or Pro anchor residues at the C-terminus. In terms of biological role, allele B*44:02: Presents immunodominant viral epitopes derived from EBV/HHV-4 EBNA4 (VEITPYKPTW) and EBNA6 (AEGGVGWRHW, EENLLDFVRF), triggering memory CD8-positive T cell response. Displays self-peptides sharing a signature motif, namely a Glu at position 2 and Phe, Tyr or Trp anchor residues at the C-terminus. Functionally, allele B*45:01: Displays self-peptides sharing a signature motif, namely a Glu at position 2 and Ala or Pro anchor residues at the C-terminus. Allele B*46:01: Preferentially presents nonameric peptides sharing a signature motif, namely Ala and Leu at position 2 and Tyr, Phe, Leu, or Met anchor residues at the C-terminus. The peptide-bound form interacts with KIR2DL3 and inhibits NK cell cytotoxic response in a peptide-specific way. Its function is as follows. Allele B*47:01: Displays self-peptides sharing a signature motif, namely an Asp at position 2 and Leu or Met anchor residues at the C-terminus. In terms of biological role, allele B*49:01: Displays self-peptides sharing a signature motif, namely a Glu at position 2 and Ile or Val anchor residues at the C-terminus. Functionally, allele B*50:01: Displays self-peptides sharing a signature motif, namely a Glu at position 2 and Ala or Pro anchor residues at the C-terminus. Allele B*51:01: Presents an octomeric HIV-1 epitope derived from gag-pol (TAFTIPSI) to the public TRAV17/TRBV7-3 TCR clonotype, strongly suppressing HIV-1 replication. Its function is as follows. Allele B*54:01: Displays peptides sharing a common signature motif, namely a Pro residue at position 2 and Ala anchor residue at the C-terminus. In terms of biological role, allele B*55:01: Displays peptides sharing a common signature motif, namely a Pro residue at position 2 and Ala anchor residue at the C-terminus. Functionally, allele B*56:01: Displays peptides sharing a common signature motif, namely a Pro residue at position 2 and Ala anchor residue at the C-terminus. Allele B*57:01: The peptide-bound form recognizes KIR3DL1 and inhibits NK cell cytotoxic response. Presents HIV gag peptides (immunodominant KAFSPEVIPMF and subdominant KALGPAATL epitopes) predominantly to CD8-positive T cell clones expressing a TRAV41-containing TCR, triggering HLA-B-restricted T cell responses. Its function is as follows. Allele B*67:01: Displays peptides sharing a common signature motif, namely a Pro residue at position 2 and Leu anchor residue at the C-terminus. The chain is HLA class I histocompatibility antigen, B alpha chain from Homo sapiens (Human).